The chain runs to 194 residues: Peptidyl-tRNA hydrolase (194 aa).

Position 16 (Tyr-16) interacts with tRNA. His-21 acts as the Proton acceptor in catalysis. 3 residues coordinate tRNA: Phe-67, Asn-69, and Asn-115.

The protein belongs to the PTH family. Monomer.

It localises to the cytoplasm. It catalyses the reaction an N-acyl-L-alpha-aminoacyl-tRNA + H2O = an N-acyl-L-amino acid + a tRNA + H(+). Functionally, hydrolyzes ribosome-free peptidyl-tRNAs (with 1 or more amino acids incorporated), which drop off the ribosome during protein synthesis, or as a result of ribosome stalling. In terms of biological role, catalyzes the release of premature peptidyl moieties from peptidyl-tRNA molecules trapped in stalled 50S ribosomal subunits, and thus maintains levels of free tRNAs and 50S ribosomes. The chain is Peptidyl-tRNA hydrolase from Klebsiella pneumoniae (strain 342).